The following is a 32-amino-acid chain: Enhancer of rudimentary homolog (32 aa).

This sequence belongs to the E(R) family. Homodimer. Component of the methylosome, a 20S complex containing at least CLNS1A/pICln, PRMT5/SKB1, WDR77/MEP50, PRMT1 and ERH. Interacts with CHTOP.

The protein resides in the nucleus. Functionally, may have a role in the cell cycle. AP 3910 has antibacterial activity against B.megaterium. In Sus scrofa (Pig), this protein is Enhancer of rudimentary homolog (ERH).